A 443-amino-acid polypeptide reads, in one-letter code: Trigger factor (443 aa).

Residues 161-246 enclose the PPIase FKBP-type domain; the sequence is ADGVTITYHG…VISVTAPRLP (86 aa).

Belongs to the FKBP-type PPIase family. Tig subfamily.

It is found in the cytoplasm. It catalyses the reaction [protein]-peptidylproline (omega=180) = [protein]-peptidylproline (omega=0). Involved in protein export. Acts as a chaperone by maintaining the newly synthesized protein in an open conformation. Functions as a peptidyl-prolyl cis-trans isomerase. The protein is Trigger factor of Nitrosococcus oceani (strain ATCC 19707 / BCRC 17464 / JCM 30415 / NCIMB 11848 / C-107).